A 59-amino-acid chain; its full sequence is Large ribosomal subunit protein bL32 (59 aa).

The tract at residues 1–59 (MAVQQNKKSPSKRGMHRSHDALTAPALSVDSTTGEVHRPHHISPNGMYRGRKVVKAKGE) is disordered. Residues 49–59 (RGRKVVKAKGE) show a composition bias toward basic residues.

The protein belongs to the bacterial ribosomal protein bL32 family.

This Neisseria meningitidis serogroup B (strain ATCC BAA-335 / MC58) protein is Large ribosomal subunit protein bL32 (rpmF).